Consider the following 504-residue polypeptide: Protein phosphatase 1J (504 aa).

Disordered stretches follow at residues 1–102 (MLNR…RLPW) and 194–217 (PLCLPSTPGTPGVSSPSQLVSPQS). Over residues 14 to 23 (SSSGTSSQRS) the composition is skewed to low complexity. At Thr41 the chain carries Phosphothreonine. Residues 59 to 73 (TAETPVSFSRPTFLQ) show a composition bias toward polar residues. A phosphoserine mark is found at Ser65 and Ser75. Positions 103–496 (STGYAEVINA…DDISVFVIPL (394 aa)) constitute a PPM-type phosphatase domain. Positions 197–217 (LPSTPGTPGVSSPSQLVSPQS) are enriched in low complexity.

The protein belongs to the PP2C family. In terms of assembly, interacts with UBE2I/UBC9.

The catalysed reaction is O-phospho-L-seryl-[protein] + H2O = L-seryl-[protein] + phosphate. It carries out the reaction O-phospho-L-threonyl-[protein] + H2O = L-threonyl-[protein] + phosphate. The polypeptide is Protein phosphatase 1J (Ppm1j) (Rattus norvegicus (Rat)).